The following is a 429-amino-acid chain: Glutamate-1-semialdehyde 2,1-aminomutase 1 (429 aa).

At lysine 268 the chain carries N6-(pyridoxal phosphate)lysine.

It belongs to the class-III pyridoxal-phosphate-dependent aminotransferase family. HemL subfamily. As to quaternary structure, homodimer. Pyridoxal 5'-phosphate serves as cofactor.

The protein resides in the cytoplasm. It catalyses the reaction (S)-4-amino-5-oxopentanoate = 5-aminolevulinate. The protein operates within porphyrin-containing compound metabolism; protoporphyrin-IX biosynthesis; 5-aminolevulinate from L-glutamyl-tRNA(Glu): step 2/2. The chain is Glutamate-1-semialdehyde 2,1-aminomutase 1 from Staphylococcus saprophyticus subsp. saprophyticus (strain ATCC 15305 / DSM 20229 / NCIMB 8711 / NCTC 7292 / S-41).